The primary structure comprises 361 residues: FK506-binding protein 39 kDa (361 aa).

The disordered stretch occupies residues 122–256 (LVDEEDEEEE…PSSPKTRTLK (135 aa)). A compositionally biased stretch (acidic residues) spans 123–174 (VDEEDEEEEESDEDYDLSPTEEDLVETVSGDEESEEESESEDNSASEEDELD). S192 is modified (phosphoserine). A compositionally biased stretch (basic and acidic residues) spans 208-227 (QKVEGTPVKEKKVAFAEKLE). T213 is subject to Phosphothreonine. Over residues 241 to 252 (QASSNAPSSPKT) the composition is skewed to polar residues. A Phosphoserine modification is found at S249. Positions 275–361 (GKKVEMRYIG…VFEVKLVRVH (87 aa)) constitute a PPIase FKBP-type domain.

It belongs to the FKBP-type PPIase family. FKBP3/4 subfamily.

It is found in the nucleus. The protein resides in the nucleolus. It carries out the reaction [protein]-peptidylproline (omega=180) = [protein]-peptidylproline (omega=0). In terms of biological role, PPIase that acts as a histone chaperone. Histone proline isomerase that increases the rate of cis-trans isomerization at prolines on the histone H3 N-terminal tail. Proline isomerization influences H3 methylation thereby regulating gene expression. The protein is FK506-binding protein 39 kDa of Schizosaccharomyces pombe (strain 972 / ATCC 24843) (Fission yeast).